We begin with the raw amino-acid sequence, 271 residues long: Chitinase 6 (271 aa).

Residues 1–20 form the signal peptide; it reads MARRLSLLAVVLAMVAAVSA. Positions 25–60 constitute a Chitin-binding type-1 domain; the sequence is AQSCGCASDQCCSKWGFCGTGSDYCGTGCQAGPCDV. 6 cysteine pairs are disulfide-bonded: Cys28/Cys36, Cys30/Cys42, Cys35/Cys49, Cys88/Cys137, Cys150/Cys159, and Cys239/Cys271. Glu132 serves as the catalytic Proton donor. Asn268 is a glycosylation site (N-linked (GlcNAc...) asparagine).

The protein belongs to the glycosyl hydrolase 19 family. Chitinase class IV subfamily. Expressed in roots, leaves, sheaths and meristems.

It carries out the reaction Random endo-hydrolysis of N-acetyl-beta-D-glucosaminide (1-&gt;4)-beta-linkages in chitin and chitodextrins.. May function in reproductive organs during embryogenesis and seed maturation. This chain is Chitinase 6 (Cht6), found in Oryza sativa subsp. japonica (Rice).